We begin with the raw amino-acid sequence, 530 residues long: Phosphoenolpyruvate carboxykinase (ATP) (530 aa).

Substrate is bound by residues Arg58, Tyr195, and Lys201. ATP contacts are provided by residues Lys201, His220, and 236–244 (GLSGTGKTT). The Mn(2+) site is built by Lys201 and His220. Asp257 provides a ligand contact to Mn(2+). ATP is bound by residues Glu285, Arg321, 440 to 441 (RI), and Thr446. Arg321 lines the substrate pocket.

The protein belongs to the phosphoenolpyruvate carboxykinase (ATP) family. The cofactor is Mn(2+).

The protein resides in the cytoplasm. The enzyme catalyses oxaloacetate + ATP = phosphoenolpyruvate + ADP + CO2. It functions in the pathway carbohydrate biosynthesis; gluconeogenesis. Its function is as follows. Involved in the gluconeogenesis. Catalyzes the conversion of oxaloacetate (OAA) to phosphoenolpyruvate (PEP) through direct phosphoryl transfer between the nucleoside triphosphate and OAA. This is Phosphoenolpyruvate carboxykinase (ATP) from Staphylococcus aureus (strain Mu3 / ATCC 700698).